We begin with the raw amino-acid sequence, 256 residues long: uncharacterized protein (256 aa).

The 68-residue stretch at 16–83 folds into the S4 RNA-binding domain; it reads VRLQKILSRA…DSLVYLALNK (68 aa). Asp121 (nucleophile) is an active-site residue.

It belongs to the pseudouridine synthase RsuA family.

The catalysed reaction is a uridine in RNA = a pseudouridine in RNA. This is an uncharacterized protein from Mycobacterium leprae (strain TN).